Reading from the N-terminus, the 1088-residue chain is RNA-directed RNA polymerase (1088 aa).

The RdRp catalytic domain maps to 501-687 (LSYGDVTRFL…AKRYIAGGKI (187 aa)).

This sequence belongs to the reoviridae RNA-directed RNA polymerase family. In terms of assembly, interacts with VP3 (Potential). Interacts with VP2; this interaction activates VP1. Interacts with NSP5; this interaction is probably necessary for the formation of functional virus factories. Interacts with NSP2; this interaction is weak. Mg(2+) serves as cofactor.

The protein localises to the virion. It carries out the reaction RNA(n) + a ribonucleoside 5'-triphosphate = RNA(n+1) + diphosphate. Functionally, RNA-directed RNA polymerase that is involved in both transcription and genome replication. Together with VP3 capping enzyme, forms an enzyme complex positioned near the channels situated at each of the five-fold vertices of the core. Following infection, the outermost layer of the virus is lost, leaving a double-layered particle (DLP) made up of the core and VP6 shell. VP1 then catalyzes the transcription of fully conservative plus-strand genomic RNAs that are extruded through the DLP's channels into the cytoplasm where they function as mRNAs for translation of viral proteins. One copy of each of the viral (+)RNAs is also recruited during core assembly, together with newly synthesized polymerase complexes and VP2. The polymerase of these novo-formed particles catalyzes the synthesis of complementary minus-strands leading to dsRNA formation. To do so, the polymerase specifically recognizes and binds 4 bases 5'-UGUG-3' in the conserved 3'-sequence of plus-strand RNA templates. VP2 presumably activates the autoinhibited VP1-RNA complex to coordinate packaging and genome replication. Once dsRNA synthesis is complete, the polymerase switches to the transcriptional mode, thus providing secondary transcription. The polypeptide is RNA-directed RNA polymerase (Rotavirus A (strain RVA/Human/United States/Wa/1974/G1P1A[8]) (RV-A)).